Consider the following 499-residue polypeptide: MEFSVKNGSVEKQRTACLVVGVYEPRRLSAAAEQLDKLSEGYISTLLRRGDLEGKAGQTLLLHNVPNVPADRVLLVGCGKERELTERQYKQIIQKMVQAVSETGSMEVVCFLTELHVKGRTSYWNVRFAIEAIQESLYSYNDFKSIKPEVRREFRRVIFNVANRKDLADAERALEHGKAISTGVAFAKNVANCPPNVCNPAYLAELAKGLAAEYDNIRTTVIDEAEMAALGMNAYLAVSRGSQNPAYLSVIEYKNHPNPDAKPIVLVGKGLTFDSGGISIKPSDSMDEMKYDMGGAASVYGTMKALAEMKLPLNVIGVLAGCENMPDGNAYRPGDILTTMNGLTVEVLNTDAEGRLVLCDTLTYVERFEPELVIDMATLTGACMIALGAHNSGLMSTSNVLANELLNAAEQADDKAWRLPLGEEYQEQLKSNFADLANIGGRLGGAITAGQFLSNFTKKYSWAHLDIAGTAWKSGAAKGATGRPVSLLSQFLINKANNQ.

Mn(2+) contacts are provided by Lys269 and Asp274. Lys281 is a catalytic residue. 3 residues coordinate Mn(2+): Asp292, Asp351, and Glu353. Arg355 is a catalytic residue.

This sequence belongs to the peptidase M17 family. Mn(2+) serves as cofactor.

The protein resides in the cytoplasm. The enzyme catalyses Release of an N-terminal amino acid, Xaa-|-Yaa-, in which Xaa is preferably Leu, but may be other amino acids including Pro although not Arg or Lys, and Yaa may be Pro. Amino acid amides and methyl esters are also readily hydrolyzed, but rates on arylamides are exceedingly low.. It catalyses the reaction Release of an N-terminal amino acid, preferentially leucine, but not glutamic or aspartic acids.. In terms of biological role, presumably involved in the processing and regular turnover of intracellular proteins. Catalyzes the removal of unsubstituted N-terminal amino acids from various peptides. The protein is Probable cytosol aminopeptidase of Actinobacillus pleuropneumoniae serotype 5b (strain L20).